The primary structure comprises 281 residues: Probable endonuclease 4 (281 aa).

9 residues coordinate Zn(2+): His-70, His-110, Glu-146, Asp-180, His-183, His-217, Asp-230, His-232, and Glu-262.

Belongs to the AP endonuclease 2 family. Requires Zn(2+) as cofactor.

The catalysed reaction is Endonucleolytic cleavage to 5'-phosphooligonucleotide end-products.. Functionally, endonuclease IV plays a role in DNA repair. It cleaves phosphodiester bonds at apurinic or apyrimidinic (AP) sites, generating a 3'-hydroxyl group and a 5'-terminal sugar phosphate. The chain is Probable endonuclease 4 from Nitratiruptor sp. (strain SB155-2).